Reading from the N-terminus, the 300-residue chain is Haloalkane dehalogenase (300 aa).

Residues 32 to 155 form the AB hydrolase-1 domain; sequence AIVFQHGNPT…PAVRGVFQGF (124 aa). Asp-109 acts as the Nucleophile in catalysis. Glu-133 serves as the catalytic Proton donor. His-273 acts as the Proton acceptor in catalysis.

The protein belongs to the haloalkane dehalogenase family. Type 2 subfamily. Monomer.

The enzyme catalyses 1-haloalkane + H2O = a halide anion + a primary alcohol + H(+). Its function is as follows. Catalyzes hydrolytic cleavage of carbon-halogen bonds in halogenated aliphatic compounds, leading to the formation of the corresponding primary alcohols, halide ions and protons. The chain is Haloalkane dehalogenase from Mycobacterium bovis (strain ATCC BAA-935 / AF2122/97).